Reading from the N-terminus, the 359-residue chain is Probable dual-specificity RNA methyltransferase RlmN (359 aa).

The active-site Proton acceptor is the Glu91. One can recognise a Radical SAM core domain in the interval 97 to 329; that stretch reads QHYGHSVCVT…KKNGVNCVVR (233 aa). Cysteines 104 and 340 form a disulfide. Residues Cys111, Cys115, and Cys118 each contribute to the [4Fe-4S] cluster site. Residues 163 to 164, Ser195, 218 to 220, and Asn296 contribute to the S-adenosyl-L-methionine site; these read GE and SLH. Catalysis depends on Cys340, which acts as the S-methylcysteine intermediate.

The protein belongs to the radical SAM superfamily. RlmN family. Requires [4Fe-4S] cluster as cofactor.

The protein localises to the cytoplasm. It carries out the reaction adenosine(2503) in 23S rRNA + 2 reduced [2Fe-2S]-[ferredoxin] + 2 S-adenosyl-L-methionine = 2-methyladenosine(2503) in 23S rRNA + 5'-deoxyadenosine + L-methionine + 2 oxidized [2Fe-2S]-[ferredoxin] + S-adenosyl-L-homocysteine. The catalysed reaction is adenosine(37) in tRNA + 2 reduced [2Fe-2S]-[ferredoxin] + 2 S-adenosyl-L-methionine = 2-methyladenosine(37) in tRNA + 5'-deoxyadenosine + L-methionine + 2 oxidized [2Fe-2S]-[ferredoxin] + S-adenosyl-L-homocysteine. Functionally, specifically methylates position 2 of adenine 2503 in 23S rRNA and position 2 of adenine 37 in tRNAs. The chain is Probable dual-specificity RNA methyltransferase RlmN from Streptococcus pyogenes serotype M5 (strain Manfredo).